The following is a 196-amino-acid chain: dTTP/UTP pyrophosphatase (196 aa).

The active-site Proton acceptor is Asp-72.

Belongs to the Maf family. YhdE subfamily. A divalent metal cation is required as a cofactor.

The protein localises to the cytoplasm. It catalyses the reaction dTTP + H2O = dTMP + diphosphate + H(+). The enzyme catalyses UTP + H2O = UMP + diphosphate + H(+). In terms of biological role, nucleoside triphosphate pyrophosphatase that hydrolyzes dTTP and UTP. May have a dual role in cell division arrest and in preventing the incorporation of modified nucleotides into cellular nucleic acids. The polypeptide is dTTP/UTP pyrophosphatase (Chlamydia felis (strain Fe/C-56) (Chlamydophila felis)).